A 100-amino-acid chain; its full sequence is Insertion element IS600 uncharacterized 11 kDa protein (100 aa).

This sequence belongs to the transposase 8 family.

This is Insertion element IS600 uncharacterized 11 kDa protein from Shigella sonnei.